The primary structure comprises 1047 residues: MVDLQEKQCTIVKRNGMFVPFDRNRIFQALEAAFRDTRRIDDHMPLPEDLESSIRSITHQVVKEVVQKITDGQVVTVERIQDMVESQLYVNGLQDVARDYIVYRDDRKAHRKKSWQSLSVVRRCGTVVHFNPMKISAALEKAFRATDKTEGMTPSSVREEINALTQNIVAEIEECCPQQDRRIDIEKIQDIVEQQLMVVGHYAVAKNYILYREARARVRDNREEDGSTEKTIAEEAVEVLSKDGSTYTMTHSQLLAHLARACSRFPETTDAALLTDMAFANFYSGIKESEVVLACIMAARANIEKEPDYAFVAAELLLDVVYKEALGKSKYAEDLEQAHRDHFKRYIAEGDTYRLNAELKHLFDLDALADAMDLSRDLQFSYMGIQNLYDRYFNHHEGCRLETPQIFWMRVAMGLALNEQDKTSWAITFYNLLSTFRYTPATPTLFNSGMRHSQLSSCYLSTVQDNLVNIYKVIADNAMLSKWAGGIGNDWTAIRATGALIKGTNGRSQGVIPFIKVTNDTAVAVNQGGKRKGAVCVYLEVWHLDYEDFLELRKNTGDERRRAHDVNIASWIPDLFFKRLQQKGTWTLFSPDDVPGLHDAYGEEFERLYEEYERKVDTGEIRLFKKVEAEDLWRKMLSMLFETGHPWMTFKDPSNIRSAQDHKGVVRCSNLCTEILLNCSETETAVCNLGSINLVQHIVGDGLDEEKLSETISIAVRMLDNVIDINFYPTKEAKEANFAHRAIGLGVMGFQDALYKLDISYASQEAVEFADYSSELISYYAIQASCLLAKERGTYSSYKGSKWDRGLLPIDTIQLLANYRGEANLQMDTSSRKDWEPIRSLVKEHGMRHCQLMAIAPTATISNIIGVTQSIEPTYKHLFVKSNLSGEFTIPNVYLIEKLKKLGIWDADMLDDLKYFDGSLLEIERIPDHLKHIFLTAFEIEPEWIIECASRRQKWIDMGQSLNLYLAQPDGKKLSNMYLTAWKKGLKTTYYLRSSSATTVEKSFVDINKRGIQPRWMKNKSASAGIIVERAKKAPVCSLEEGCEACQ.

ATP-cone domains are found at residues 9–111, 118–219, and 237–327; these read CTIV…KAHR, LSVV…ARVR, and VEVL…EALG. Residues T442, 457–458, G486, 670–674, and 857–861 each bind substrate; these read SC, NLCTE, and PTATI. A disulfide bond links C458 and C687. The Proton acceptor role is filled by N670. The Cysteine radical intermediate role is filled by C672. E674 functions as the Proton acceptor in the catalytic mechanism.

The protein belongs to the ribonucleoside diphosphate reductase large chain family. In terms of assembly, tetramer of two alpha and two beta subunits.

It catalyses the reaction a 2'-deoxyribonucleoside 5'-diphosphate + [thioredoxin]-disulfide + H2O = a ribonucleoside 5'-diphosphate + [thioredoxin]-dithiol. With respect to regulation, under complex allosteric control mediated by deoxynucleoside triphosphates and ATP binding. The type of nucleotide bound at the specificity site determines substrate preference. It seems probable that ATP makes the enzyme reduce CDP and UDP, dGTP favors ADP reduction and dTTP favors GDP reduction. Functionally, provides the precursors necessary for DNA synthesis. Catalyzes the biosynthesis of deoxyribonucleotides from the corresponding ribonucleotides. This Chlamydia trachomatis serovar D (strain ATCC VR-885 / DSM 19411 / UW-3/Cx) protein is Ribonucleoside-diphosphate reductase subunit alpha (nrdA).